The chain runs to 740 residues: Ion-translocating oxidoreductase complex subunit C (740 aa).

4Fe-4S ferredoxin-type domains follow at residues Gly369–Tyr397 and Lys407–Phe436. [4Fe-4S] cluster contacts are provided by Cys377, Cys380, Cys383, Cys387, Cys416, Cys419, Cys422, and Cys426. Residues Lys602–Ala717 form a disordered region. Low complexity-rich tracts occupy residues Gln605–Gln615 and Gln637–Gln647.

Belongs to the 4Fe4S bacterial-type ferredoxin family. RnfC subfamily. As to quaternary structure, the complex is composed of six subunits: RsxA, RsxB, RsxC, RsxD, RsxE and RsxG. [4Fe-4S] cluster serves as cofactor.

The protein localises to the cell inner membrane. Part of a membrane-bound complex that couples electron transfer with translocation of ions across the membrane. Required to maintain the reduced state of SoxR. This chain is Ion-translocating oxidoreductase complex subunit C, found in Escherichia coli (strain ATCC 8739 / DSM 1576 / NBRC 3972 / NCIMB 8545 / WDCM 00012 / Crooks).